A 244-amino-acid polypeptide reads, in one-letter code: 3-oxoacyl-[acyl-carrier-protein] reductase FabG (244 aa).

NADP(+) contacts are provided by residues 12–15 (GASR) and Thr37. Gly50 and Gly53 together coordinate Ca(2+). NADP(+)-binding positions include 59-60 (NV) and Asn86. Ser138 contributes to the substrate binding site. Asn145 is a binding site for Ca(2+). The active-site Proton acceptor is Tyr151. NADP(+) is bound by residues 151–155 (YAAAK) and Ile184. 2 residues coordinate Ca(2+): Glu233 and Thr234.

The protein belongs to the short-chain dehydrogenases/reductases (SDR) family. As to quaternary structure, homotetramer.

The catalysed reaction is a (3R)-hydroxyacyl-[ACP] + NADP(+) = a 3-oxoacyl-[ACP] + NADPH + H(+). Its pathway is lipid metabolism; fatty acid biosynthesis. Functionally, catalyzes the NADPH-dependent reduction of beta-ketoacyl-ACP substrates to beta-hydroxyacyl-ACP products, the first reductive step in the elongation cycle of fatty acid biosynthesis. The chain is 3-oxoacyl-[acyl-carrier-protein] reductase FabG (fabG) from Salmonella typhi.